A 389-amino-acid chain; its full sequence is Succinate--CoA ligase [ADP-forming] subunit beta (389 aa).

Residues 9-244 form the ATP-grasp domain; that stretch reads KQLLAEYGIP…KTQEDETEVT (236 aa). Residues K46, 53 to 55, G102, and E107 contribute to the ATP site; that span reads GRG. Mg(2+) contacts are provided by N199 and D213. Substrate is bound by residues N264 and 321–323; that span reads GIV.

Belongs to the succinate/malate CoA ligase beta subunit family. Heterotetramer of two alpha and two beta subunits. Mg(2+) is required as a cofactor.

The catalysed reaction is succinate + ATP + CoA = succinyl-CoA + ADP + phosphate. It catalyses the reaction GTP + succinate + CoA = succinyl-CoA + GDP + phosphate. Its pathway is carbohydrate metabolism; tricarboxylic acid cycle; succinate from succinyl-CoA (ligase route): step 1/1. Functionally, succinyl-CoA synthetase functions in the citric acid cycle (TCA), coupling the hydrolysis of succinyl-CoA to the synthesis of either ATP or GTP and thus represents the only step of substrate-level phosphorylation in the TCA. The beta subunit provides nucleotide specificity of the enzyme and binds the substrate succinate, while the binding sites for coenzyme A and phosphate are found in the alpha subunit. The polypeptide is Succinate--CoA ligase [ADP-forming] subunit beta (Xanthomonas oryzae pv. oryzae (strain MAFF 311018)).